The sequence spans 558 residues: Phosphatidylserine lipase ABHD16A (558 aa).

Transmembrane regions (helical) follow at residues 60-80 (ILAL…FAFF) and 93-113 (VVPF…VACL). The Cytoplasmic portion of the chain corresponds to 114–558 (RGIGRWTNPQ…AQNFQMPWHL (445 aa)). One can recognise an AB hydrolase-1 domain in the interval 281–407 (LVICCEGNAG…LVTRTVRQHL (127 aa)). Residues S355, D430, and H507 each act as charge relay system in the active site.

The protein belongs to the AB hydrolase superfamily. ABHD16 family.

Its subcellular location is the membrane. It carries out the reaction 1-heptadecanoyl-2-(5Z,8Z,11Z,14Z-eicosatetraenoyl)-sn-glycero-3-phosphoserine + H2O = 1-heptadecanoyl-sn-glycero-3-phosphoserine + (5Z,8Z,11Z,14Z)-eicosatetraenoate + H(+). The catalysed reaction is 1-hexadecanoyl-2-(9Z-octadecenoyl)-sn-glycero-3-phospho-L-serine + H2O = 1-hexadecanoyl-sn-glycero-3-phospho-L-serine + (9Z)-octadecenoate + H(+). The enzyme catalyses 1-octadecanoyl-2-(9Z,12Z-octadecadienoyl)-sn-glycero-3-phosphoserine + H2O = 1-octadecanoyl-sn-glycero-3-phosphoserine + (9Z,12Z)-octadecadienoate + H(+). It catalyses the reaction 1-heptadecanoyl-2-(5Z,8Z,11Z,14Z-eicosatetraenoyl)-sn-glycero-3-phosphocholine + H2O = 1-heptadecanoyl-sn-glycero-3-phosphocholine + (5Z,8Z,11Z,14Z)-eicosatetraenoate + H(+). It carries out the reaction 1-hexadecanoyl-2-(9Z-octadecenoyl)-sn-glycero-3-phosphoglycerol + H2O = 1-hexadecanoyl-sn-glycero-3-phosphoglycerol + (9Z)-octadecenoate + H(+). The catalysed reaction is 1-hexadecanoyl-2-(9Z-octadecenoyl)-sn-glycero-3-phospho-(1D-myo-inositol) + H2O = 1-hexadecanoyl-sn-glycero-3-phospho-(1D-myo-inositol) + (9Z)-octadecenoate + H(+). The enzyme catalyses 1-heptadecanoyl-2-(5Z,8Z,11Z,14Z-eicosatetraenoyl)-sn-glycero-3-phosphoethanolamine + H2O = 1-heptadecanoyl-sn-glycero-3-phosphoethanolamine + (5Z,8Z,11Z,14Z)-eicosatetraenoate + H(+). It catalyses the reaction 1-hexadecanoyl-2-(9Z-octadecenoyl)-sn-glycero-3-phospho-(1'-sn-glycerol) + H2O = 1-hexadecanoyl-sn-glycero-3-phospho-(1'-sn-glycerol) + (9Z)-octadecenoate + H(+). It carries out the reaction Hydrolyzes glycerol monoesters of long-chain fatty acids.. The catalysed reaction is 1-tetradecanoylglycerol + H2O = tetradecanoate + glycerol + H(+). The enzyme catalyses 2-hexadecanoylglycerol + H2O = glycerol + hexadecanoate + H(+). It catalyses the reaction 1-(9Z-octadecenoyl)-glycerol + H2O = glycerol + (9Z)-octadecenoate + H(+). It carries out the reaction 2-(9Z-octadecenoyl)-glycerol + H2O = glycerol + (9Z)-octadecenoate + H(+). The catalysed reaction is 2-(9Z,12Z-octadecadienoyl)-glycerol + H2O = (9Z,12Z)-octadecadienoate + glycerol + H(+). The enzyme catalyses 1-(5Z,8Z,11Z,14Z-eicosatetraenoyl)-glycerol + H2O = glycerol + (5Z,8Z,11Z,14Z)-eicosatetraenoate + H(+). It catalyses the reaction 2-(5Z,8Z,11Z,14Z-eicosatetraenoyl)-glycerol + H2O = glycerol + (5Z,8Z,11Z,14Z)-eicosatetraenoate + H(+). It carries out the reaction prostaglandin D2-1-glycerol ester + H2O = prostaglandin D2 + glycerol + H(+). The catalysed reaction is 2-glyceryl-15-deoxy-Delta(12,14)-prostaglandin J2 + H2O = 15-deoxy-Delta(12,14)-prostaglandin J2 + glycerol + H(+). The enzyme catalyses 1-(9Z,12Z-octadecadienoyl)-glycerol + H2O = (9Z,12Z)-octadecadienoate + glycerol + H(+). Its function is as follows. Phosphatidylserine (PS) lipase that mediates the hydrolysis of phosphatidylserine to generate lysophosphatidylserine (LPS). LPS constitutes a class of signaling lipids that regulates immunological and neurological processes. Has no activity towards diacylglycerol, triacylglycerol or lysophosphatidylserine lipase. Also has monoacylglycerol lipase activity, with preference for 1-(9Z,12Z-octadecadienoyl)-glycerol (1-LG) and 2-glyceryl-15-deoxy-Delta(12,14)-prostaglandin J2 (15d-PGJ(2)-G). This Pongo abelii (Sumatran orangutan) protein is Phosphatidylserine lipase ABHD16A.